We begin with the raw amino-acid sequence, 69 residues long: UPF0337 protein XAC4007 (69 aa).

Belongs to the UPF0337 (CsbD) family.

The sequence is that of UPF0337 protein XAC4007 from Xanthomonas axonopodis pv. citri (strain 306).